A 242-amino-acid chain; its full sequence is Peptidyl-prolyl cis-trans isomerase FKBP20-2, chloroplastic (242 aa).

The N-terminal 31 residues, 1–31 (MVTILSTPLSPRLTFLCETKLSLSRSNRSVC), are a transit peptide targeting the chloroplast. The transit peptide at 32-67 (CSLSEEPKDQCLSRRSLVYVLVASPCLLLPALSSSA) directs the protein to the thylakoid. Residues 138–225 (GQQVTFHYIG…VFDVELLSIQ (88 aa)) form the PPIase FKBP-type domain. A disulfide bridge connects residues cysteine 227 and cysteine 241.

It belongs to the FKBP-type PPIase family. In terms of assembly, interacts in vitro with LTO1.

Its subcellular location is the plastid. The protein localises to the chloroplast thylakoid lumen. The catalysed reaction is [protein]-peptidylproline (omega=180) = [protein]-peptidylproline (omega=0). Functionally, PPIases accelerate the folding of proteins. It catalyzes the cis-trans isomerization of proline imidic peptide bonds in oligopeptides. Involved in the accumulation of the PSII complex. The sequence is that of Peptidyl-prolyl cis-trans isomerase FKBP20-2, chloroplastic from Arabidopsis thaliana (Mouse-ear cress).